The chain runs to 135 residues: MSKLNKTILADFEAAQIQRKLPEFNQGDTVVVNVKVKEGNRERVQAYEGVVIGTKNAGLNSAFTVRKISHGFGVERVFQTHSAIIDSVEVKRRGKVRAGKLYYLRGLEGKAARIKEDLAAAAQAKAARQAAAKAE.

This sequence belongs to the bacterial ribosomal protein bL19 family.

Functionally, this protein is located at the 30S-50S ribosomal subunit interface and may play a role in the structure and function of the aminoacyl-tRNA binding site. The sequence is that of Large ribosomal subunit protein bL19 from Xanthomonas oryzae pv. oryzae (strain KACC10331 / KXO85).